The following is a 573-amino-acid chain: Membrane protein insertase YidC (573 aa).

The helical transmembrane segment at 6-26 (VFLIFAWLMVAALLWMEWGKD) threads the bilayer. A disordered region spans residues 63–82 (PQAGSPAAVPATSTTTATPA). Transmembrane regions (helical) follow at residues 355 to 375 (FSIMAIIGQGLFWVLSHLHSF), 379 to 399 (WGWAIIGLVVLLRLALYPLSA), 446 to 466 (GGCLPLLIQMPIFFALYWVLV), 488 to 508 (PYFILPVLNIAIMWATQKLTP), and 524 to 544 (PLVFGVMMAFMPAGLVLYWVV).

Belongs to the OXA1/ALB3/YidC family. Type 1 subfamily. In terms of assembly, interacts with the Sec translocase complex via SecD. Specifically interacts with transmembrane segments of nascent integral membrane proteins during membrane integration.

The protein resides in the cell inner membrane. In terms of biological role, required for the insertion and/or proper folding and/or complex formation of integral membrane proteins into the membrane. Involved in integration of membrane proteins that insert both dependently and independently of the Sec translocase complex, as well as at least some lipoproteins. Aids folding of multispanning membrane proteins. In Xanthomonas campestris pv. campestris (strain 8004), this protein is Membrane protein insertase YidC.